The chain runs to 515 residues: FAD-dependent oxidoreductase domain-containing protein 1 homolog (515 aa).

Residues 18–37 (AGATSNGSGSSGGDKSGEDL) form a disordered region. A helical transmembrane segment spans residues 100 to 116 (VLIIGGGGVGSSIAYWL).

In terms of assembly, associates with mitochondrial complex I assembly intermediates during its biogenesis. The cofactor is FAD.

It is found in the mitochondrion inner membrane. Involved in the assembly of the mitochondrial membrane respiratory chain NADH dehydrogenase (Complex I). In Drosophila melanogaster (Fruit fly), this protein is FAD-dependent oxidoreductase domain-containing protein 1 homolog.